The primary structure comprises 548 residues: Spindle pole body-associated protein cut12 (548 aa).

The tract at residues 122-325 (FKSPLLQSTP…GQQSKYKGKE (204 aa)) is interaction with plo1. Residues 123–182 (KSPLLQSTPKPNINNPDNENKSKHDEFDNRYNININESYKNETKSNQRLGEDVPSKKKYP) are disordered. Polar residues predominate over residues 126–139 (LLQSTPKPNINNPD). Composition is skewed to basic and acidic residues over residues 140–151 (NENKSKHDEFDN) and 161–182 (YKNETKSNQRLGEDVPSKKKYP). Residues 261–312 (KQKFSMLDSAHSDLELELTSIRERLESLILEKQEEINFWKQRCRALETEKIH) are a coiled coil. Over residues 344 to 356 (PITTKVVSRPSQS) the composition is skewed to polar residues. 2 disordered regions span residues 344 to 369 (PITTKVVSRPSQSDVREPQEQVPSKN) and 510 to 548 (SRVDYDLKSPNQRTANAKKRLEERRRRRKLKLQELQLNS). A coiled-coil region spans residues 522-548 (RTANAKKRLEERRRRRKLKLQELQLNS).

As to quaternary structure, self-associates. Interacts with plo1.

The protein localises to the cytoplasm. Its subcellular location is the cytoskeleton. The protein resides in the microtubule organizing center. It is found in the spindle pole body. Required for bipolar spindle formation. May act as a regulator of the p34cdc2/cyclin B kinase. Required for full activation of the plo1 kinase. However, in cut12.1 cells at restrictive temperature the H1 kinase does rise concomitant with entry into mitosis, indicating that cut12 is not required for activation of p34cdc2/cyclin B. The cut12.s11 allele may promote cdc2-independent phosphorylation of SPB proteins thereby overcoming the requirement for cdc25 in cell cycle progression. This is Spindle pole body-associated protein cut12 (cut12) from Schizosaccharomyces pombe (strain 972 / ATCC 24843) (Fission yeast).